The primary structure comprises 425 residues: Interferon regulatory factor 8 (425 aa).

Residues 7–114 constitute a DNA-binding region (IRF tryptophan pentad repeat); the sequence is GRRLRQWLIE…EPYKVYRIVP (108 aa).

Belongs to the IRF family.

Its subcellular location is the nucleus. The protein resides in the cytoplasm. Functionally, plays a role as a transcriptional activator or repressor. Specifically binds to the upstream regulatory region of type I IFN and IFN-inducible MHC class I genes (the interferon consensus sequence (ICS)). Plays a regulatory role in cells of the immune system. The sequence is that of Interferon regulatory factor 8 (IRF8) from Gallus gallus (Chicken).